The following is a 418-amino-acid chain: Putative competence-damage inducible protein (418 aa).

The protein belongs to the CinA family.

This chain is Putative competence-damage inducible protein, found in Streptococcus gordonii (strain Challis / ATCC 35105 / BCRC 15272 / CH1 / DL1 / V288).